We begin with the raw amino-acid sequence, 78 residues long: Large ribosomal subunit protein bL28 (78 aa).

The disordered stretch occupies residues Met1–Thr25.

This sequence belongs to the bacterial ribosomal protein bL28 family.

This chain is Large ribosomal subunit protein bL28, found in Aliivibrio fischeri (strain ATCC 700601 / ES114) (Vibrio fischeri).